Reading from the N-terminus, the 403-residue chain is MAHTSESVNPRDVCIVGVARTPMGGFLGSLSSLPATKLGSLAIAAALKRANVDPALVQEVVFGNVLSANLGQAPARQAALGAGIPNSVICTTVNKVCASGMKAVMIAAQSIQLGINDVVVAGGMESMSNTPKYLAEARKGSRFGHDSLVDGMLKDGLWDVYNDCGMGSCAELCAEKFQITREQQDDYAVQSFERGIAAQEAGAFTWEIVPVEVSGGRGRPSTIVDKDEGLGKFDAAKLRKLRPSFKENGGTVTAGNASSISDGAAALVLVSGEKALQLGLLVLAKIKGYGDAAQEPEFFTTAPALAIPKAIAHAGLESSQVDYYEINEAFAVVALANQKLLGIAPEKVNVNGGAVSLGHPLGCSGARILITLLGILKKRNGKYGVGGVCNGGGGASALVLELL.

The active-site Acyl-thioester intermediate is C97. CoA is bound at residue K237. A254 lines the K(+) pocket. A CoA-binding site is contributed by S258. V355 contributes to the K(+) binding site. Residues H359 and C389 each act as proton acceptor in the active site.

The protein belongs to the thiolase-like superfamily. Thiolase family. As to expression, expressed in root tips, emerging leaves, young leaves, stems, and anthers at the microspore stage.

The protein localises to the cytoplasm. It localises to the peroxisome. It catalyses the reaction 2 acetyl-CoA = acetoacetyl-CoA + CoA. The protein operates within metabolic intermediate biosynthesis; (R)-mevalonate biosynthesis; (R)-mevalonate from acetyl-CoA: step 1/3. Functionally, catalyzes the condensation of two molecules of acetyl-CoA to produce acetoacetyl-CoA. Generates the bulk of the acetoacetyl-CoA precursor required for the cytosol-localized, mevalonate-derived isoprenoid biosynthesis. The generated isoprenoids are required for normal growth and development. Essential protein during embryogenesis. This chain is Acetyl-CoA acetyltransferase 2, found in Arabidopsis thaliana (Mouse-ear cress).